A 1142-amino-acid chain; its full sequence is Protein kinase C-like (1142 aa).

Positions 1-67 (MNDEDKVHDI…LRELQMRRLG (67 aa)) constitute an REM-1 1 domain. The interval 70-139 (VDNMSLGASP…PPDSNVPRAR (70 aa)) is disordered. The 78-residue stretch at 149 to 226 (KFDTPHLGPR…LKRYEELHID (78 aa)) folds into the REM-1 2 domain. Positions 231–349 (GPDDDSINLP…LRRKKIEAEM (119 aa)) constitute a C2 domain. A disordered region spans residues 357-403 (ADRVGSRAPPPQFPMGAQSPQFAAPPTSPGSQEQNTMIPPQAPPPSQ). Polar residues predominate over residues 385–394 (PGSQEQNTMI). 2 Phorbol-ester/DAG-type zinc fingers span residues 457 to 505 (GHKF…VTKC) and 525 to 576 (PHRF…PDFC). Disordered regions lie at residues 592 to 622 (TQKKTHKDKASSMSERTLRPGSKTSISSGSI) and 651 to 807 (SQTT…TDPG). Polar residues predominate over residues 613–622 (SKTSISSGSI). Low complexity-rich tracts occupy residues 663–677 (TSTSSTTASAAAAAA), 712–724 (SAQQQQGYGSPQQ), and 741–765 (PQARPQQQQQQQQQTPQQVSPMYQQ). A Protein kinase domain is found at 817–1076 (FNFLAVLGKG…AQEIMSQPFF (260 aa)). Residues 823–831 (LGKGNFGKV) and Lys846 each bind ATP. Asp942 acts as the Proton acceptor in catalysis. In terms of domain architecture, AGC-kinase C-terminal spans 1077–1142 (RNINWDDIYH…RGFSYTADFE (66 aa)).

This sequence belongs to the protein kinase superfamily. AGC Ser/Thr protein kinase family. PKC subfamily.

It carries out the reaction L-seryl-[protein] + ATP = O-phospho-L-seryl-[protein] + ADP + H(+). The catalysed reaction is L-threonyl-[protein] + ATP = O-phospho-L-threonyl-[protein] + ADP + H(+). The sequence is that of Protein kinase C-like from Neurospora crassa (strain ATCC 24698 / 74-OR23-1A / CBS 708.71 / DSM 1257 / FGSC 987).